Consider the following 122-residue polypeptide: uncharacterized protein (122 aa).

The Cytoplasmic segment spans residues 1-24; that stretch reads MKNRKFSNLLLLRLRILCFNKKPA. A helical transmembrane segment spans residues 25-45; it reads FAATSYAFFFRNFSVLIFIMV. Residues 46–57 lie on the Extracellular side of the membrane; sequence PDEKENGAAADN. A helical transmembrane segment spans residues 58-78; the sequence is SFSLLIGRGVVLFLFYCPTAL. At 79–122 the chain is on the cytoplasmic side; it reads KMHGPVPAHWFCDKNIEAIQSDGQIRLLRSGPFPWSHGTCIRGA.

The protein localises to the membrane. This is an uncharacterized protein from Saccharomyces cerevisiae (strain ATCC 204508 / S288c) (Baker's yeast).